The primary structure comprises 430 residues: Stress protein DDR48 (430 aa).

The tract at residues 1-430 (MGLFDKVKQF…RNQYGGDDDY (430 aa)) is disordered. Residues 12-27 (NSNNNNNDSGNNNQGD) show a composition bias toward low complexity. Over residues 37–60 (GEDRVNQFKSKIGEDRFDKMESKV) the composition is skewed to basic and acidic residues. The segment covering 70–421 (NDNDSNNNDS…SYGSSNRGGR (352 aa)) has biased composition (low complexity). 6 repeat units span residues 74–81 (SNNNDSYG), 82–89 (SNNNDSYG), 90–97 (SNNNDSYG), 98–105 (SNNNDSYG), 106–113 (SNNNDSYG), and 114–121 (SNNDDSYG). Residues 74-414 (SNNNDSYGSN…GSSNNDDSYG (341 aa)) form a 38 X 8 AA approximate tandem repeats of S-[NS]-N-[ND]-D-S-Y-G region. Residues 124 to 131 (NKKKSSYG) form a 7; approximate repeat. A run of 5 repeats spans residues 132–139 (SNNDDSYG), 141–148 (SNNNDSYG), 149–156 (SNNNDSYG), 157–164 (SNNNDSYG), and 165–172 (SNNDDSYG). Residues 175 to 182 (NKNKSSYG) form a 13; approximate repeat. A phosphoserine mark is found at Ser183 and Ser191. 2 repeat units span residues 183-190 (SNNDDSYG) and 191-198 (SNNDDSYG). The 16; approximate repeat unit spans residues 201–208 (NKKKSSYG). 4 tandem repeats follow at residues 209–216 (SSNNDSYG), 217–224 (SNNDDSYG), 225–232 (SNNNDSYG), and 233–240 (SNNDDSYG). One copy of the 21; approximate repeat lies at 243 to 250 (NKKKSSYG). A run of 3 repeats spans residues 251–258 (SNNDDSYG), 260–267 (SNNNDSYG), and 268–275 (SNNDDSYG). The 25; approximate repeat unit spans residues 278-285 (NKNKSSYG). A run of 2 repeats spans residues 287 to 294 (SSNDDSYG) and 296 to 303 (SNNDDSYG). Residues 306-313 (NKKKSSYG) form a 28; approximate repeat. Residues Ser314 and Ser322 each carry the phosphoserine modification. Tandem repeats lie at residues 314–321 (SNNDDSYG) and 322–329 (SNNDDSYG). A 31; approximate repeat occupies 332–339 (NKKKSSYG). Repeat copies occupy residues 340 to 347 (SSNNDSYG) and 348 to 355 (SNNDDSYG). One copy of the 34; approximate repeat lies at 358-365 (NKKKSSYG). 2 repeat units span residues 366-373 (SNNDDSYG) and 375-382 (SNNNDSYG). Residues 393 to 400 (NRNKNSYG) form a 37; approximate repeat. Copy 38 of the repeat occupies 407–414 (SNNDDSYG).

It belongs to the DDR48 family. In terms of processing, probably highly glycosylated.

DNA damage-responsive protein that may be required for maintaining the rate of spontaneous mutagenesis. Shows low ATP and GTP hydrolysis activity. Dispensable for acquisition of thermotolerance and does not play a significant role in recovery or protection of cells from acute heat shock. The polypeptide is Stress protein DDR48 (DDR48) (Saccharomyces cerevisiae (strain ATCC 204508 / S288c) (Baker's yeast)).